Reading from the N-terminus, the 318-residue chain is Porphobilinogen deaminase (318 aa).

At Cys241 the chain carries S-(dipyrrolylmethanemethyl)cysteine.

This sequence belongs to the HMBS family. Monomer. The cofactor is dipyrromethane.

The catalysed reaction is 4 porphobilinogen + H2O = hydroxymethylbilane + 4 NH4(+). It functions in the pathway porphyrin-containing compound metabolism; protoporphyrin-IX biosynthesis; coproporphyrinogen-III from 5-aminolevulinate: step 2/4. Tetrapolymerization of the monopyrrole PBG into the hydroxymethylbilane pre-uroporphyrinogen in several discrete steps. The chain is Porphobilinogen deaminase from Geobacter metallireducens (strain ATCC 53774 / DSM 7210 / GS-15).